We begin with the raw amino-acid sequence, 1437 residues long: Protein SUPPRESSOR OF npr1-1, CONSTITUTIVE 1 (1437 aa).

Met-1 bears the N-acetylmethionine mark. The region spanning 19-182 is the TIR domain; the sequence is RRYDVFPSFR…ELAEDVLRKT (164 aa). 28 to 33 lines the NAD(+) pocket; sequence RGEDVR. Glu-93 is a catalytic residue. LRR repeat units follow at residues 554–576, 577–598, 600–621, 622–645, 647–668, 670–691, 692–715, 781–805, 807–828, 829–851, 852–875, 877–895, 897–918, 919–939, 940–962, 964–985, 1009–1029, 1030–1052, 1054–1075, 1076–1096, 1097–1121, 1123–1143, and 1161–1185; these read MRNL…VYLP, LKLR…TFKA, YLVN…TLPL, GSLK…SLAI, LEEL…IQNA, KLIY…DLNL, ESLE…KMGC, LGSL…SKAT, LESL…IGNL, HRLV…DVNL, SSLE…STNI, WLYL…IGNL, RLVR…DVNL, SSLE…PLIS, ESIK…SKAT, LKNL…IGNL, SSLM…PLIS, TNIV…IGNL, RLVK…DVNL, TRIE…DFTR, TVLM…IFRL, and LSDA…NIEY.

This sequence belongs to the disease resistance TIR-NB-LRR family. In terms of assembly, homodimer. Interacts (via TIR domain) with TPR1. Interacts with EDS1. Interacts with SRFR1. Interacts with HSP90-3. Binds to MORC1/CRT1. Interacts with TRAF1B. Post-translationally, met-1 is specifically acetylated by N-terminal acetyltransferase complex A (NatA). The NatA-mediated acetylation serves as a degradation signal. In terms of processing, met-1 is specifically acetylated by N-terminal acetyltransferase complex B (NatB). The NatB-mediated acetylation stabilizes SNC1. As to expression, expressed in guard cells and epidermal cells, but not detected in mesophyll cells.

The protein localises to the cytoplasm. It is found in the microsome. The protein resides in the nucleus. It catalyses the reaction NAD(+) + H2O = ADP-D-ribose + nicotinamide + H(+). Its function is as follows. Disease resistance protein of the TIR-NB-LRR-type. Part of the RPP5 locus that contains a cluster of several paralogous disease resistance (R) genes. Resistance proteins guard the plant against pathogens that contain an appropriate avirulence protein via an indirect interaction with this avirulence protein. That triggers a defense system including the hypersensitive response, which restricts the pathogen growth. Probably acts as a NAD(+) hydrolase (NADase): in response to activation, catalyzes cleavage of NAD(+) into ADP-D-ribose (ADPR) and nicotinamide; NAD(+) cleavage triggering a defense system that promotes cell death. Expression regulated by MOS1 at chromatin level. Nuclear localization of SNC1 is essential for its activity. ABA deficiency can rescue high-temperature inhibition of SNC1-mediated defense responses. The polypeptide is Protein SUPPRESSOR OF npr1-1, CONSTITUTIVE 1 (Arabidopsis thaliana (Mouse-ear cress)).